A 308-amino-acid chain; its full sequence is Limonin dehydrogenase (308 aa).

The protein belongs to the aldehyde dehydrogenase family.

It localises to the periplasm. With respect to regulation, completely inhibited by HgCl(2), CoCl(2) and CaCl(2). Catalyzes the NAD(+)-dependent conversion of limonin. This Pseudomonas putida (Arthrobacter siderocapsulatus) protein is Limonin dehydrogenase.